Consider the following 322-residue polypeptide: Protein IRREGULAR XYLEM 15 (322 aa).

Residues 28–48 (LWLLAFVSFFTIVFLLTLLYT) form a helical membrane-spanning segment.

In terms of tissue distribution, expressed in rosette leaves, stems and siliques. Expressed in the xylem.

The protein localises to the golgi apparatus membrane. In terms of biological role, required for xylan biosynthesis, but not directly involved in catalyzing the addition of sugars to the growing polymer. The protein is Protein IRREGULAR XYLEM 15 (IRX15) of Arabidopsis thaliana (Mouse-ear cress).